Here is a 2339-residue protein sequence, read N- to C-terminus: Voltage-dependent N-type calcium channel subunit alpha-1B (2339 aa).

The disordered stretch occupies residues 1–37; the sequence is MVRFGDELGGRYGGPGGGERARGGGAGGAGGPGPGGL. Residues 1–90 are Cytoplasmic-facing; that stretch reads MVRFGDELGG…DNVVRKYAKR (90 aa). Residues 10-37 show a composition bias toward gly residues; the sequence is GRYGGPGGGERARGGGAGGAGGPGPGGL. Arg22 bears the Omega-N-methylarginine mark. Residues 82 to 359 form an I repeat; it reads NVVRKYAKRI…LVLGVLSGEF (278 aa). Residues 91-114 traverse the membrane as a helical segment; the sequence is ITEWPPFEYMILATIIANCIVLAL. Over 115–131 the chain is Extracellular; the sequence is EQHLPDGDKTPMSERLD. A helical membrane pass occupies residues 132–152; it reads DTEPYFIGIFCFEAGIKIIAL. Residues 153 to 163 lie on the Cytoplasmic side of the membrane; the sequence is GFVFHKGSYLR. Residues 164–182 form a helical membrane-spanning segment; that stretch reads NGWNVMDFVVVLTGILATA. At 183–187 the chain is on the extracellular side; the sequence is GTDFD. A helical transmembrane segment spans residues 188–211; that stretch reads LRTLRAVRVLRPLKLVSGIPSLQV. The Cytoplasmic portion of the chain corresponds to 212-221; sequence VLKSIMKAMV. Residues 222–244 form a helical membrane-spanning segment; sequence PLLQIGLLLFFAILMFAIIGLEF. Over 245–331 the chain is Extracellular; sequence YMGKFHKACF…NTNDAAGNTW (87 aa). A glycan (N-linked (GlcNAc...) asparagine) is linked at Asn256. Residues 332-356 form a helical membrane-spanning segment; it reads NWLYFIPLIIIGSFFMLNLVLGVLS. Topologically, residues 357-482 are cytoplasmic; sequence GEFAKERERV…FFIRRMVKAQ (126 aa). Positions 379–396 are binding to the beta subunit; sequence QQIERELNGYLEWIFKAE. Ser411 carries the phosphoserine modification. 451 to 458 serves as a coordination point for ATP; the sequence is ASLKSGKT. One copy of the II repeat lies at 468-712; sequence EKMFRFFIRR…VFLAIAVDNL (245 aa). A helical transmembrane segment spans residues 483–501; it reads SFYWVVLCVVALNTLCVAM. Topologically, residues 502 to 511 are extracellular; that stretch reads VHYNQPRRLT. Residues 512-534 traverse the membrane as a helical segment; sequence TTLYFAEFVFLGLFLTEMSLKMY. Residues 535 to 544 are Cytoplasmic-facing; sequence GLGPRSYFRS. Ser544 lines the a 1,2-diacyl-sn-glycero-3-phospho-(1D-myo-inositol-4,5-bisphosphate) pocket. A helical membrane pass occupies residues 545–566; the sequence is SFNCFDFGVIVGSVFEVVWAAI. At 567-573 the chain is on the extracellular side; it reads KPGSSFG. The chain crosses the membrane as a helical span at residues 574-586; sequence ISVLRALRLLRIF. Arg584 and Lys587 together coordinate a 1,2-diacyl-sn-glycero-3-phospho-(1D-myo-inositol-4,5-bisphosphate). Residues 587–604 lie on the Cytoplasmic side of the membrane; it reads KVTKYWSSLRNLVVSLLN. A helical membrane pass occupies residues 605-630; it reads SMKSIISLLFLLFLFIVVFALLGMQL. The Extracellular portion of the chain corresponds to 631–682; the sequence is FGGQFNFQDETPTTNFDTFPAAILTVFQILTGEDWNAVMYHGIESQGGVSKG. A helical membrane pass occupies residues 683 to 709; that stretch reads MFSSFYFIVLTLFGNYTLLNVFLAIAV. Topologically, residues 710–1151 are cytoplasmic; sequence DNLANAQELT…FCHYIVTMRY (442 aa). Phosphoserine is present on residues Ser745, Ser748, and Ser783. Basic and acidic residues-rich tracts occupy residues 816 to 826, 857 to 886, 922 to 932, and 965 to 976; these read PLVVELGRDGA, KDKT…EERP, GSPEEAAEREP, and GPREAESGEEPA. 2 disordered regions span residues 816–1038 and 1054–1076; these read PLVV…VTVG and QPED…DPNT. A compositionally biased stretch (basic residues) spans 977-986; that stretch reads RRHRARHKAQ. Residues 990 to 1029 show a composition bias toward basic and acidic residues; that stretch reads EAVEKETTEKEATEKEAEIVEADKEKELRNHQPREPHCDL. A Phosphoserine modification is found at Ser1069. Residues 1137 to 1419 form an III repeat; it reads NLLRRFCHYI…IFVALIIITF (283 aa). A helical transmembrane segment spans residues 1152-1170; that stretch reads FEVVILVVIALSSIALAAE. At 1171 to 1178 the chain is on the extracellular side; the sequence is DPVRTDSP. The helical transmembrane segment at 1179–1203 threads the bilayer; the sequence is RNNALKYLDYIFTGVFTFEMVIKMI. The Cytoplasmic segment spans residues 1204 to 1217; that stretch reads DLGLLLHPGAYFRD. The helical transmembrane segment at 1218-1238 threads the bilayer; that stretch reads LWNILDFIVVSGALVAFAFSG. Topologically, residues 1239–1244 are extracellular; the sequence is SKGKDI. The chain crosses the membrane as a helical span at residues 1245–1265; the sequence is NTIKSLRVLRVLRPLKTIKRL. The Cytoplasmic segment spans residues 1266-1283; sequence PKLKAVFDCVVNSLKNVL. The chain crosses the membrane as a helical span at residues 1284 to 1303; the sequence is NILIVYMLFMFIFAVIAVQL. The Extracellular segment spans residues 1304–1390; the sequence is FKGKFFYCTD…EQGPSPGYRM (87 aa). The chain crosses the membrane as a helical span at residues 1391–1416; the sequence is ELSIFYVVYFVVFPFFFVNIFVALII. Topologically, residues 1417 to 1471 are cytoplasmic; that stretch reads ITFQEQGDKVMSECSLEKNERACIDFAISAKPLTRYMPQNRQSFQYKTWTFVVSP. One copy of the IV repeat lies at 1456 to 1711; sequence NRQSFQYKTW…LFVAVIMDNF (256 aa). Residues 1472-1490 form a helical membrane-spanning segment; it reads PFEYFIMAMIALNTVVLMM. Over 1491–1498 the chain is Extracellular; sequence KFYDAPYE. Residues 1499-1523 form a helical membrane-spanning segment; that stretch reads YELMLKCLNIVFTSMFSMECVLKII. Residues 1524-1533 lie on the Cytoplasmic side of the membrane; sequence AFGVLNYFRD. The helical transmembrane segment at 1534–1555 threads the bilayer; sequence AWNVFDFVTVLGSITDILVTEI. At 1556-1563 the chain is on the extracellular side; the sequence is AETNNFIN. A glycan (N-linked (GlcNAc...) asparagine) is linked at Asn1563. Residues 1564–1582 traverse the membrane as a helical segment; sequence LSFLRLFRAARLIKLLRQG. Residues 1583 to 1601 lie on the Cytoplasmic side of the membrane; sequence YTIRILLWTFVQSFKALPY. A helical transmembrane segment spans residues 1602–1621; sequence VCLLIAMLFFIYAIIGMQVF. Residues 1622 to 1683 are Extracellular-facing; it reads GNIALDDDTS…ANATECGSDF (62 aa). Asn1675 carries an N-linked (GlcNAc...) asparagine glycan. Residues 1684–1707 traverse the membrane as a helical segment; it reads AYFYFVSFIFLCSFLMLNLFVAVI. Topologically, residues 1708–2339 are cytoplasmic; it reads MDNFEYLTRD…YHHPDQDHWC (632 aa). In terms of domain architecture, EF-hand spans 1724 to 1759; it reads HHLDEFIRVWAEYDPAACGRISYNDMFEMLKHMSPP. Asp1737, Arg1743, and Asp1748 together coordinate Ca(2+). The segment covering 1916–1931 has biased composition (polar residues); that stretch reads SSTSLSNGGAIQNQES. Disordered regions lie at residues 1916 to 1968 and 1981 to 2206; these read SSTS…VGRS and TRRG…YKTA. The segment covering 1946–1960 has biased composition (basic and acidic residues); the sequence is DAPHEARPPLERGHS. Positions 2049–2063 are enriched in basic residues; the sequence is SHHHHHRCHRRRDRK. Phosphoserine is present on Ser2066. Basic and acidic residues predominate over residues 2098–2116; sequence CRRERERRQERGRSQERRQ. A compositionally biased stretch (low complexity) spans 2143–2153; sequence PSLSSHPTSPT. Polar residues predominate over residues 2164–2180; the sequence is GSGSVNGSPLLSTSGAS. 3 positions are modified to phosphoserine: Ser2224, Ser2233, and Ser2256.

It belongs to the calcium channel alpha-1 subunit (TC 1.A.1.11) family. CACNA1B subfamily. As to quaternary structure, multisubunit complex consisting of alpha-1, alpha-2, beta and delta subunits in a 1:1:1:1 ratio. The channel activity is directed by the pore-forming and voltage-sensitive alpha-1 subunit. In many cases, this subunit is sufficient to generate voltage-sensitive calcium channel activity. The auxiliary subunits beta and alpha-2/delta linked by a disulfide bridge regulate the channel activity. Interacts with RIMS1. Interacts with FMR1 (via C-terminus); this interaction induces a decrease in the number of presynaptic functional CACNA1B channels at the cell surface. Post-translationally, phosphorylated in vitro by CaM-kinase II, PKA, PKC and CGPK. In terms of tissue distribution, isoform Alpha-1b-1 and isoform Alpha-1b-2 are expressed in the central nervous system, but not in skeletal muscle or aorta. Expressed in the cerebral white matter, cortex, hippocampus, basal ganglia, and cerebellum.

The protein localises to the membrane. It carries out the reaction Ca(2+)(in) = Ca(2+)(out). Its activity is regulated as follows. Is specifically blocked by omega-conotoxin GVIA. Is specifically blocked by omega-conotoxin MVIIA (ziconotide). Is insensitive to dihydropyridines (DHP). Is specifically blocked by omega-conotoxin MVIIA (ziconotide). Is insensitive to dihydropyridines (DHP). Functionally, voltage-sensitive calcium channels (VSCC) mediate the entry of calcium ions into excitable cells and are also involved in a variety of calcium-dependent processes, including muscle contraction, hormone or neurotransmitter release, gene expression, cell motility, cell division and cell death. This alpha-1B subunit gives rise to N-type calcium currents. N-type calcium channels belong to the 'high-voltage activated' (HVA) group. They are involved in pain signaling. Calcium channels containing alpha-1B subunit may play a role in directed migration of immature neurons. Mediates Ca(2+) release probability at hippocampal neuronal soma and synaptic terminals. Its function is as follows. Voltage-sensitive calcium channels (VSCC) mediate the entry of calcium ions into excitable cells and are also involved in a variety of calcium-dependent processes, including muscle contraction, hormone or neurotransmitter release, gene expression, cell motility, cell division and cell death. This alpha-1B subunit gives rise to N-type calcium currents. The sequence is that of Voltage-dependent N-type calcium channel subunit alpha-1B (CACNA1B) from Homo sapiens (Human).